We begin with the raw amino-acid sequence, 210 residues long: uncharacterized protein (210 aa).

The CS domain maps to 2-91 (SRHPEVKWAQ…AEAKWWKKLV (90 aa)). Residues 165-210 (GMGGMGGMDEFEDESDDEEEVSKPQDAEKAAEAGKSQESDAKTETS) are disordered. A compositionally biased stretch (acidic residues) spans 173-184 (DEFEDESDDEEE). A compositionally biased stretch (basic and acidic residues) spans 185-210 (VSKPQDAEKAAEAGKSQESDAKTETS).

This is an uncharacterized protein from Oryza sativa subsp. indica (Rice).